Here is an 81-residue protein sequence, read N- to C-terminus: Sulfur carrier protein TusA (81 aa).

The active-site Cysteine persulfide intermediate is the Cys19.

This sequence belongs to the sulfur carrier protein TusA family.

It is found in the cytoplasm. In terms of biological role, sulfur carrier protein which probably makes part of a sulfur-relay system. The chain is Sulfur carrier protein TusA from Shewanella sp. (strain MR-4).